The following is a 204-amino-acid chain: Rho GDP-dissociation inhibitor 1 (204 aa).

The segment at 1–36 (MAEQEPTAEQLAQIAAENEEDEHSVNYKPPAQKSIQ) is disordered. Ala2 carries the N-acetylalanine modification. The residue at position 34 (Ser34) is a Phosphoserine. Lys43 is modified (N6-acetyllysine). Ser47 is modified (phosphoserine). Residues 66–83 (NVPNVVVTRLTLVCSTAP) form a hydrophobic region. Phosphoserine; by PKA is present on Ser101. N6-acetyllysine is present on Lys105. Ser115 carries the post-translational modification Phosphoserine; by PKC. Position 127 is an N6-acetyllysine (Lys127). Residues Lys138 and Lys141 each participate in a glycyl lysine isopeptide (Lys-Gly) (interchain with G-Cter in SUMO1); alternate cross-link. Residues Lys138 and Lys141 each participate in a glycyl lysine isopeptide (Lys-Gly) (interchain with G-Cter in SUMO2); alternate cross-link. Residue Lys141 is modified to N6-acetyllysine; alternate. The residue at position 141 (Lys141) is an N6-succinyllysine; alternate. N6-acetyllysine is present on Lys178.

It belongs to the Rho GDI family. In terms of assembly, monomer. Interacts with FER. Interacts with PLXNB3. Forms a heterodimer with RAC1. Interacts with RHOA, the affinity is increased by three orders of magnitude when RHOA is prenylated. Interacts with PSMD10; the interaction increases ARHGDIA association with RHOA, leading to ARHGDIA-mediated inactivation of RHOA and ROCK and prolonged AKT activation. Interacts with KANK2; the interaction is direct and may regulate the interaction of ARHGDIA with RHOA, RAC1 and CDC42. Interacts with RHOC. Interacts with CDC42. Interacts with NGFR (via death domain); NGFR binding decreases the affinity for RHOA. As to expression, brain, lung, thymus, spleen, small intestine, and kidney, and weakly in heart and liver.

It localises to the cytoplasm. In terms of biological role, controls Rho proteins homeostasis. Regulates the GDP/GTP exchange reaction of the Rho proteins by inhibiting the dissociation of GDP from them, and the subsequent binding of GTP to them. Retains Rho proteins such as CDC42, RAC1 and RHOA in an inactive cytosolic pool, regulating their stability and protecting them from degradation. Actively involved in the recycling and distribution of activated Rho GTPases in the cell, mediates extraction from membranes of both inactive and activated molecules due its exceptionally high affinity for prenylated forms. Through the modulation of Rho proteins, may play a role in cell motility regulation. In glioma cells, inhibits cell migration and invasion by mediating the signals of SEMA5A and PLXNB3 that lead to inactivation of RAC1. The chain is Rho GDP-dissociation inhibitor 1 (ARHGDIA) from Bos taurus (Bovine).